We begin with the raw amino-acid sequence, 218 residues long: Probable 2-aminoethanethiol dioxygenase (218 aa).

The cofactor is Fe cation.

It carries out the reaction cysteamine + O2 = hypotaurine + H(+). The polypeptide is Probable 2-aminoethanethiol dioxygenase (ado-1) (Dictyostelium discoideum (Social amoeba)).